The following is a 166-amino-acid chain: Small ribosomal subunit protein uS5 (166 aa).

The region spanning 11 to 74 (LNEKLIAVNR…EKARRNMFTI (64 aa)) is the S5 DRBM domain.

The protein belongs to the universal ribosomal protein uS5 family. Part of the 30S ribosomal subunit. Contacts proteins S4 and S8.

Its function is as follows. With S4 and S12 plays an important role in translational accuracy. In terms of biological role, located at the back of the 30S subunit body where it stabilizes the conformation of the head with respect to the body. The chain is Small ribosomal subunit protein uS5 from Aliivibrio salmonicida (strain LFI1238) (Vibrio salmonicida (strain LFI1238)).